We begin with the raw amino-acid sequence, 277 residues long: uncharacterized protein (277 aa).

Solcar repeat units follow at residues 1–84 (MDQA…SKRV), 96–179 (ISVL…LKLW), and 184–268 (PTSL…VGMH). The next 6 helical transmembrane spans lie at 3-24 (QAIA…LDLA), 60-80 (LSIN…IYDF), 102-122 (LCSS…IWVV), 152-172 (CYAG…QFMA), 190-210 (IFMS…LLVI), and 240-261 (FYKG…TFLV).

Belongs to the mitochondrial carrier (TC 2.A.29) family.

It is found in the mitochondrion inner membrane. This is an uncharacterized protein from Schizosaccharomyces pombe (strain 972 / ATCC 24843) (Fission yeast).